A 105-amino-acid polypeptide reads, in one-letter code: Small ribosomal subunit protein uS10 (105 aa).

Belongs to the universal ribosomal protein uS10 family. In terms of assembly, part of the 30S ribosomal subunit.

Involved in the binding of tRNA to the ribosomes. The sequence is that of Small ribosomal subunit protein uS10 from Acidobacterium capsulatum (strain ATCC 51196 / DSM 11244 / BCRC 80197 / JCM 7670 / NBRC 15755 / NCIMB 13165 / 161).